Here is a 172-residue protein sequence, read N- to C-terminus: RNA pyrophosphohydrolase (172 aa).

One can recognise a Nudix hydrolase domain in the interval 6–149; sequence GYRLNVGIVI…KRDVYRRAMK (144 aa). Positions 38–59 match the Nudix box motif; that stretch reads GGIDDGESPEQAMFRELYEEVG.

The protein belongs to the Nudix hydrolase family. RppH subfamily. A divalent metal cation serves as cofactor.

Accelerates the degradation of transcripts by removing pyrophosphate from the 5'-end of triphosphorylated RNA, leading to a more labile monophosphorylated state that can stimulate subsequent ribonuclease cleavage. This is RNA pyrophosphohydrolase from Vibrio cholerae serotype O1 (strain ATCC 39315 / El Tor Inaba N16961).